The chain runs to 870 residues: Leucine--tRNA ligase (870 aa).

Residues 42–52 (PYPSGKLHMGH) carry the 'HIGH' region motif. Positions 629–633 (KMSKS) match the 'KMSKS' region motif. Lys-632 lines the ATP pocket.

It belongs to the class-I aminoacyl-tRNA synthetase family.

It is found in the cytoplasm. It catalyses the reaction tRNA(Leu) + L-leucine + ATP = L-leucyl-tRNA(Leu) + AMP + diphosphate. This is Leucine--tRNA ligase from Azotobacter vinelandii (strain DJ / ATCC BAA-1303).